Consider the following 273-residue polypeptide: Large ribosomal subunit protein uL2cz/uL2cy (273 aa).

Disordered regions lie at residues 1–25 (MAIH…VKSN) and 224–273 (NPVD…RRRK).

This sequence belongs to the universal ribosomal protein uL2 family. Part of the 50S ribosomal subunit.

Its subcellular location is the plastid. The protein resides in the chloroplast. In Phalaenopsis aphrodite subsp. formosana (Moth orchid), this protein is Large ribosomal subunit protein uL2cz/uL2cy (rpl2-A).